The primary structure comprises 352 residues: Ion-translocating oxidoreductase complex subunit D (352 aa).

The next 5 helical transmembrane spans lie at 20-40, 42-62, 78-109, 123-143, and 148-168; these read IMLL…WFFG, GTLV…ALVL, ALLT…VIIA, PAMI…TSWL, and IAVN…GHTA. An FMN phosphoryl threonine modification is found at Thr187. 5 helical membrane passes run 214–234, 242–262, 267–287, 301–321, and 322–342; these read ILAG…GVWL, WHIP…GWLF, LAAP…FFIL, LIFG…GGYP, and DGVA…DYYT.

This sequence belongs to the NqrB/RnfD family. The complex is composed of six subunits: RsxA, RsxB, RsxC, RsxD, RsxE and RsxG. FMN serves as cofactor.

Its subcellular location is the cell inner membrane. Part of a membrane-bound complex that couples electron transfer with translocation of ions across the membrane. Required to maintain the reduced state of SoxR. This is Ion-translocating oxidoreductase complex subunit D from Escherichia coli O157:H7.